Consider the following 83-residue polypeptide: Phosphoribosylformylglycinamidine synthase subunit PurS (83 aa).

Belongs to the PurS family. Homodimer. Part of the FGAM synthase complex composed of 1 PurL, 1 PurQ and 2 PurS subunits.

It localises to the cytoplasm. It catalyses the reaction N(2)-formyl-N(1)-(5-phospho-beta-D-ribosyl)glycinamide + L-glutamine + ATP + H2O = 2-formamido-N(1)-(5-O-phospho-beta-D-ribosyl)acetamidine + L-glutamate + ADP + phosphate + H(+). The protein operates within purine metabolism; IMP biosynthesis via de novo pathway; 5-amino-1-(5-phospho-D-ribosyl)imidazole from N(2)-formyl-N(1)-(5-phospho-D-ribosyl)glycinamide: step 1/2. Its function is as follows. Part of the phosphoribosylformylglycinamidine synthase complex involved in the purines biosynthetic pathway. Catalyzes the ATP-dependent conversion of formylglycinamide ribonucleotide (FGAR) and glutamine to yield formylglycinamidine ribonucleotide (FGAM) and glutamate. The FGAM synthase complex is composed of three subunits. PurQ produces an ammonia molecule by converting glutamine to glutamate. PurL transfers the ammonia molecule to FGAR to form FGAM in an ATP-dependent manner. PurS interacts with PurQ and PurL and is thought to assist in the transfer of the ammonia molecule from PurQ to PurL. This chain is Phosphoribosylformylglycinamidine synthase subunit PurS, found in Methanocaldococcus jannaschii (strain ATCC 43067 / DSM 2661 / JAL-1 / JCM 10045 / NBRC 100440) (Methanococcus jannaschii).